Consider the following 246-residue polypeptide: NAD-dependent protein deacylase (246 aa).

One can recognise a Deacetylase sirtuin-type domain in the interval 2-246 (PTAVSDAAAP…AGVCLPAMLA (245 aa)). 29–49 (GAGVSAESGVPTFRDALTGLW) contributes to the NAD(+) binding site. Substrate contacts are provided by Y74 and R77. Residue 107–110 (QNVD) coordinates NAD(+). The Proton acceptor role is filled by H125. Zn(2+) is bound by residues C137, C140, C153, and C156. NAD(+)-binding positions include 193–195 (GTS), 219–221 (NPE), and A237.

This sequence belongs to the sirtuin family. Class III subfamily. Requires Zn(2+) as cofactor.

The protein resides in the cytoplasm. The enzyme catalyses N(6)-acetyl-L-lysyl-[protein] + NAD(+) + H2O = 2''-O-acetyl-ADP-D-ribose + nicotinamide + L-lysyl-[protein]. It catalyses the reaction N(6)-succinyl-L-lysyl-[protein] + NAD(+) + H2O = 2''-O-succinyl-ADP-D-ribose + nicotinamide + L-lysyl-[protein]. In terms of biological role, NAD-dependent lysine deacetylase and desuccinylase that specifically removes acetyl and succinyl groups on target proteins. Modulates the activities of several proteins which are inactive in their acylated form. The protein is NAD-dependent protein deacylase of Ralstonia nicotianae (strain ATCC BAA-1114 / GMI1000) (Ralstonia solanacearum).